The following is a 156-amino-acid chain: MRIHIIAVGRLRAGPEKDLIGDYLTRFARSGRALGLGPARVVEVEDRKNGGMGNEAALLRRAIPDGALIAVLDERGRVESSPDFAQRLAGWRDQGRGDLALVIGGADGIDPALRAEADFALSLGKMVWPHMLVRVMLAEQLYRAASILAGAPYHRN.

S-adenosyl-L-methionine is bound by residues leucine 72, glycine 104, and 123-128 (LGKMVW).

This sequence belongs to the RNA methyltransferase RlmH family. As to quaternary structure, homodimer.

It localises to the cytoplasm. The enzyme catalyses pseudouridine(1915) in 23S rRNA + S-adenosyl-L-methionine = N(3)-methylpseudouridine(1915) in 23S rRNA + S-adenosyl-L-homocysteine + H(+). Functionally, specifically methylates the pseudouridine at position 1915 (m3Psi1915) in 23S rRNA. This chain is Ribosomal RNA large subunit methyltransferase H, found in Roseobacter denitrificans (strain ATCC 33942 / OCh 114) (Erythrobacter sp. (strain OCh 114)).